Here is a 708-residue protein sequence, read N- to C-terminus: Serine/threonine-protein kinase Nek5 (708 aa).

A Protein kinase domain is found at 4–259; that stretch reads YDVIKAIGQG…INSILKRPFL (256 aa). ATP contacts are provided by residues 10-18 and Lys-33; that span reads IGQGAFGKA. The Proton acceptor role is filled by Asp-128. 2 disordered regions span residues 376-403 and 423-454; these read SYHPIPQENTGVEDYGQETRHGPSPSQW and KQLGLRPSSAEPNYNQRQELRSNGEEPRFQEL. Residues 440 to 454 are compositionally biased toward basic and acidic residues; it reads QELRSNGEEPRFQEL.

This sequence belongs to the protein kinase superfamily. NEK Ser/Thr protein kinase family. NIMA subfamily. It depends on Mg(2+) as a cofactor.

Its subcellular location is the cell projection. It localises to the cilium. It is found in the flagellum. It catalyses the reaction L-seryl-[protein] + ATP = O-phospho-L-seryl-[protein] + ADP + H(+). The catalysed reaction is L-threonyl-[protein] + ATP = O-phospho-L-threonyl-[protein] + ADP + H(+). The polypeptide is Serine/threonine-protein kinase Nek5 (NEK5) (Homo sapiens (Human)).